Here is a 211-residue protein sequence, read N- to C-terminus: Thymidylate kinase (211 aa).

7–14 (GIDASGKS) serves as a coordination point for ATP.

This sequence belongs to the thymidylate kinase family.

It catalyses the reaction dTMP + ATP = dTDP + ADP. In terms of biological role, phosphorylation of dTMP to form dTDP in both de novo and salvage pathways of dTTP synthesis. In Mesomycoplasma hyopneumoniae (strain 7448) (Mycoplasma hyopneumoniae), this protein is Thymidylate kinase.